A 375-amino-acid chain; its full sequence is Sulfite efflux pump SSU1 (375 aa).

Residues Met1–Ala25 are Cytoplasmic-facing. The helical transmembrane segment at Ile26–Leu46 threads the bilayer. Residues Leu47–Tyr59 are Extracellular-facing. The chain crosses the membrane as a helical span at residues Ile60–Ile80. Residues Thr81–Met101 lie on the Cytoplasmic side of the membrane. Residues Leu102–Val122 traverse the membrane as a helical segment. At Pro123–Gly135 the chain is on the extracellular side. Residues Leu136–Met156 traverse the membrane as a helical segment. The Cytoplasmic segment spans residues Thr157–Thr167. The helical transmembrane segment at Ala168–Ala188 threads the bilayer. At Asp189–Thr200 the chain is on the extracellular side. Residue Asn193 is glycosylated (N-linked (GlcNAc...) asparagine). Residues Ile201–Ile221 form a helical membrane-spanning segment. At Tyr222–Arg234 the chain is on the cytoplasmic side. The helical transmembrane segment at Ala235–Met255 threads the bilayer. Residues Gln256–Asp277 lie on the Extracellular side of the membrane. A helical membrane pass occupies residues Ile278–Leu298. The Cytoplasmic portion of the chain corresponds to Trp299–Lys309. The helical transmembrane segment at Phe310 to Thr330 threads the bilayer. The Extracellular segment spans residues Thr331–Asp343. A helical membrane pass occupies residues Ile344–Thr364. The Cytoplasmic segment spans residues Val365 to Arg375.

Belongs to the tellurite-resistance/dicarboxylate transporter (TDT) family.

The protein resides in the cell membrane. Its function is as follows. Sulphite efflux pump required for the secretion of sulphite as a reducing agent. In the presence of sulphite, cystine in keratin is directly cleaved to cysteine and S-sulphocysteine, and thereby, reduced proteins become accessible to hydrolysis by a variety of secreted endo- and exoproteases. Excretion of sulphite mediated by an efflux pump also represents a detoxification pathway for dermatophytes during infection of the epidermal stratum corneum, hair and nails, which are rich in cysteine. This is Sulfite efflux pump SSU1 from Arthroderma benhamiae (strain ATCC MYA-4681 / CBS 112371) (Trichophyton mentagrophytes).